Here is a 167-residue protein sequence, read N- to C-terminus: tRNA-specific adenosine deaminase (167 aa).

Residues 6–117 form the CMP/dCMP-type deaminase domain; sequence FSHEYWMRHA…DAKTGAAGSL (112 aa). A Zn(2+)-binding site is contributed by histidine 57. Glutamate 59 acts as the Proton donor in catalysis. Zn(2+) contacts are provided by cysteine 87 and cysteine 90.

This sequence belongs to the cytidine and deoxycytidylate deaminase family. In terms of assembly, homodimer. The cofactor is Zn(2+).

It carries out the reaction adenosine(34) in tRNA + H2O + H(+) = inosine(34) in tRNA + NH4(+). Functionally, catalyzes the deamination of adenosine to inosine at the wobble position 34 of tRNA(Arg2). In Escherichia coli O157:H7, this protein is tRNA-specific adenosine deaminase.